Here is a 197-residue protein sequence, read N- to C-terminus: Dephospho-CoA kinase (197 aa).

The region spanning 2 to 197 (IIGITGGIAS…SALLSLANPR (196 aa)) is the DPCK domain. Residue 10–15 (ASGKST) participates in ATP binding.

This sequence belongs to the CoaE family.

Its subcellular location is the cytoplasm. The enzyme catalyses 3'-dephospho-CoA + ATP = ADP + CoA + H(+). It functions in the pathway cofactor biosynthesis; coenzyme A biosynthesis; CoA from (R)-pantothenate: step 5/5. Functionally, catalyzes the phosphorylation of the 3'-hydroxyl group of dephosphocoenzyme A to form coenzyme A. The sequence is that of Dephospho-CoA kinase from Streptococcus pyogenes serotype M3 (strain ATCC BAA-595 / MGAS315).